Reading from the N-terminus, the 88-residue chain is uncharacterized protein (88 aa).

The interval methionine 1–alanine 88 is disordered. Residues tyrosine 21–asparagine 65 are compositionally biased toward basic and acidic residues.

Functionally, involved in osmoadaptation. This is an uncharacterized protein from Emericella nidulans (strain FGSC A4 / ATCC 38163 / CBS 112.46 / NRRL 194 / M139) (Aspergillus nidulans).